The primary structure comprises 103 residues: Large ribosomal subunit protein P1 (103 aa).

The disordered stretch occupies residues 66–103 (PAAGAPAAGAAGGAVEEKKEEKKAESEDESDDDMGLFD). Positions 80 to 90 (VEEKKEEKKAE) are enriched in basic and acidic residues. Acidic residues predominate over residues 91–103 (SEDESDDDMGLFD).

Belongs to the eukaryotic ribosomal protein P1/P2 family. As to quaternary structure, P1 and P2 exist as dimers at the large ribosomal subunit.

Its function is as follows. Plays an important role in the elongation step of protein synthesis. This Polyorchis penicillatus (Hydromedusa) protein is Large ribosomal subunit protein P1.